A 391-amino-acid polypeptide reads, in one-letter code: MASGDELKRRLTILGSTGSIGTSTLDVIERLGGRDRFEVAALTGNGNIPLLAAQARRMGAELAVTADGDRYGELKDALSGSGIEVAAGRTGLSEAAERDAGWVMAAIVGNAGLGPTLAAARRGADIALANKECLVSAGSLFIDAVAEGGGRLLPVDSEHNAIFQVLENDQRHAVERIVLTASGGPFRTKSLDEMQHVTAEAARAHPNWSMGLKISIDSASMFNKALEMIEARHLFNLRPDQIEVIVHPQSVVHSMVGYADGSVLAQLGCPDMRTAIGYALSYPRRCDLPVERLDFARLARLDFEAPDEVRFPALRLARRAMEEGGLQGAVLNGAKETALGAFIEGRVGFLDMAEIVEEVMNDLAGLPAATSMDDVFAADEQARQAAAGMIP.

NADPH contacts are provided by Thr-17, Gly-18, Ser-19, Ile-20, Asn-47, and Asn-130. A 1-deoxy-D-xylulose 5-phosphate-binding site is contributed by Lys-131. Glu-132 is a binding site for NADPH. Position 156 (Asp-156) interacts with Mn(2+). Ser-157, Glu-158, Ser-182, and His-205 together coordinate 1-deoxy-D-xylulose 5-phosphate. Residue Glu-158 participates in Mn(2+) binding. Gly-211 contributes to the NADPH binding site. Positions 218, 223, 224, and 227 each coordinate 1-deoxy-D-xylulose 5-phosphate. Mn(2+) is bound at residue Glu-227.

The protein belongs to the DXR family. Mg(2+) is required as a cofactor. Requires Mn(2+) as cofactor.

The enzyme catalyses 2-C-methyl-D-erythritol 4-phosphate + NADP(+) = 1-deoxy-D-xylulose 5-phosphate + NADPH + H(+). It participates in isoprenoid biosynthesis; isopentenyl diphosphate biosynthesis via DXP pathway; isopentenyl diphosphate from 1-deoxy-D-xylulose 5-phosphate: step 1/6. Functionally, catalyzes the NADPH-dependent rearrangement and reduction of 1-deoxy-D-xylulose-5-phosphate (DXP) to 2-C-methyl-D-erythritol 4-phosphate (MEP). This chain is 1-deoxy-D-xylulose 5-phosphate reductoisomerase, found in Sinorhizobium medicae (strain WSM419) (Ensifer medicae).